A 317-amino-acid chain; its full sequence is Melanocyte-stimulating hormone receptor (317 aa).

The Extracellular segment spans residues 1-37; that stretch reads MAVQGFQRRLLGSLNSTPTAIPQLGLAANQTGARCLE. A glycan (N-linked (GlcNAc...) asparagine) is linked at asparagine 29. The helical transmembrane segment at 38–63 threads the bilayer; that stretch reads VSIPDGLFLSLGLVSLVENVLVVATI. The Cytoplasmic segment spans residues 64–72; the sequence is AKNRNLHSP. Residues 73 to 93 form a helical membrane-spanning segment; sequence TYCFICCLALSDLLVSGGNVL. The Extracellular segment spans residues 94–118; the sequence is ETVVILLLEASALAARAAVVQPLDN. The helical transmembrane segment at 119 to 140 threads the bilayer; the sequence is VIDVITCSSMVSSLCFLGAIAM. Residues 141–163 are Cytoplasmic-facing; sequence DRYVSIFYALRYHSIVTLPRARQ. A helical transmembrane segment spans residues 164-183; the sequence is AIAAIWVASVLFSTLFIAYY. Topologically, residues 184–191 are extracellular; that stretch reads DHAAVLLC. The chain crosses the membrane as a helical span at residues 192–211; sequence LVVFFLAMLVLMAVLYVHML. The Cytoplasmic segment spans residues 212–240; that stretch reads ARACQHAQGIARLHKRQRPLHQGFGLKGA. The helical transmembrane segment at 241 to 266 threads the bilayer; it reads VTLTILLGIFFLCWGPFFLHLTLIVL. The Extracellular portion of the chain corresponds to 267 to 279; that stretch reads CPQHPTCSCIFKN. Residues 280–300 form a helical membrane-spanning segment; it reads FNLFLTLIICNAIIDPLIYAF. Residues 301 to 317 are Cytoplasmic-facing; it reads RRQELRRTLKEGLTCSW. Cysteine 315 carries the S-palmitoyl cysteine lipid modification.

The protein belongs to the G-protein coupled receptor 1 family. As to quaternary structure, interacts with MGRN1, but does not undergo MGRN1-mediated ubiquitination; this interaction competes with GNAS-binding and thus inhibits agonist-induced cAMP production. Interacts with OPN3; the interaction results in a decrease in MC1R-mediated cAMP signaling and ultimately a decrease in melanin production in melanocytes.

The protein localises to the cell membrane. Receptor for MSH (alpha, beta and gamma) and ACTH. The activity of this receptor is mediated by G proteins which activate adenylate cyclase. Mediates melanogenesis, the production of eumelanin (black/brown) and phaeomelanin (red/yellow), via regulation of cAMP signaling in melanocytes. This Hylobates lar (Lar gibbon) protein is Melanocyte-stimulating hormone receptor (MC1R).